A 148-amino-acid chain; its full sequence is Large ribosomal subunit protein bL9 (148 aa).

This sequence belongs to the bacterial ribosomal protein bL9 family.

Its function is as follows. Binds to the 23S rRNA. This chain is Large ribosomal subunit protein bL9, found in Syntrophobacter fumaroxidans (strain DSM 10017 / MPOB).